Consider the following 450-residue polypeptide: MKSITQLENKKVLVLGLAKSGEAAARLLAKLGAIVTVNDGKAFEENPSAQSLLEEGIKVVCGGHPLELLDENFELMVKNPGIRYDNPMVARALEKEIPVWTEVELAYLVSEAPIIGITGSNGKTTTTTMIADVLNHGGKSGVLSGNIGFPASEVAQSVTNQDTLVMELSSFQLMGIESFHPHIAVITNLMPTHIDYHGSFEEYVAAKWNIQNEMTSDDFIILNFNQDLAKELATQTNAQVVPFSTVEKVDGAYLENGGLYFKGELLMHADELGVPGSHNVENALATIAVAKLSGVSNQAIKETLSSFGGVKHRLQFVDTIDDVKFYNDSKSTNILATQKALSGFDNSKVILIAGGLDRGNEFDELIPDITGLKKMVILGESAPRVKRAADKTGVTYLDAKDVADATRIAFEQASAGDVVLLSPANASWDMYKNFEVRGDEFITTVERLKG.

Residue 119–125 (GSNGKTT) coordinates ATP.

Belongs to the MurCDEF family.

It is found in the cytoplasm. The catalysed reaction is UDP-N-acetyl-alpha-D-muramoyl-L-alanine + D-glutamate + ATP = UDP-N-acetyl-alpha-D-muramoyl-L-alanyl-D-glutamate + ADP + phosphate + H(+). It participates in cell wall biogenesis; peptidoglycan biosynthesis. In terms of biological role, cell wall formation. Catalyzes the addition of glutamate to the nucleotide precursor UDP-N-acetylmuramoyl-L-alanine (UMA). The protein is UDP-N-acetylmuramoylalanine--D-glutamate ligase of Streptococcus thermophilus (strain ATCC BAA-491 / LMD-9).